We begin with the raw amino-acid sequence, 666 residues long: Fructose-1,6-bisphosphatase class 3 (666 aa).

It belongs to the FBPase class 3 family. The cofactor is Mn(2+).

It catalyses the reaction beta-D-fructose 1,6-bisphosphate + H2O = beta-D-fructose 6-phosphate + phosphate. It functions in the pathway carbohydrate biosynthesis; gluconeogenesis. The chain is Fructose-1,6-bisphosphatase class 3 from Parabacteroides distasonis (strain ATCC 8503 / DSM 20701 / CIP 104284 / JCM 5825 / NCTC 11152).